The primary structure comprises 690 residues: Subtilisin-like protease 1 (690 aa).

An N-terminal signal peptide occupies residues 1 to 25 (MMLNKKVVALCTLTLHLFCIFLCLG). Positions 26–219 (KEVRSEENGK…IESDKLVSAD (194 aa)) are cleaved as a propeptide — inhibition peptide. The tract at residues 99–131 (EKNKNDNHNNNNNNNNISSSSSSSSNTFGEEKE) is disordered. The span at 106–124 (HNNNNNNNNISSSSSSSSN) shows a compositional bias: low complexity. Asn114 carries N-linked (GlcNAc...) asparagine glycosylation. Asn147, Thr150, and Pro152 together coordinate Ca(2+). The N-linked (GlcNAc...) asparagine glycan is linked to Asn173. Gly207 serves as a coordination point for Ca(2+). N-linked (GlcNAc...) asparagine glycosylation is present at Asn263. 2 disordered regions span residues 266–286 (HAAT…DTFS) and 305–334 (NNNN…RPGK). Over residues 305–330 (NNNNYYYSHSSNGHNSSSRNSSSSRS) the composition is skewed to low complexity. N-linked (GlcNAc...) asparagine glycans are attached at residues Asn319 and Asn324. Residue Glu340 coordinates Ca(2+). A Peptidase S8 domain is found at 345-663 (QWGLDLSRLD…AGYADINKAV (319 aa)). 2 disulfides stabilise this stretch: Cys371–Cys481 and Cys460–Cys477. Asp374 (charge relay system) is an active-site residue. Residues Asp383, Glu394, Arg398, Phe401, Asp402, Asp403, Asp404, Asn406, Ile408, Asp410, and Asp411 each contribute to the Ca(2+) site. A glycan (N-linked (GlcNAc...) asparagine) is linked at Asn419. His430 acts as the Charge relay system in catalysis. Residues Ile441, Asn444, Ile446, and Val448 each contribute to the Ca(2+) site. 3 N-linked (GlcNAc...) asparagine glycosylation sites follow: Asn490, Asn503, and Asn522. A disulfide bond links Cys523 and Cys536. Residue Asn605 is glycosylated (N-linked (GlcNAc...) asparagine). Ser608 functions as the Charge relay system in the catalytic mechanism. Asn677 carries N-linked (GlcNAc...) asparagine glycosylation.

This sequence belongs to the peptidase S8 family. Heterodimer between p54 form and prodomain p31; the interaction inhibits p54 catalytic activity. Heterodimer p31-p54 is monomeric at basic pH and dimeric at acidic pH; dimerization is driven by the N-terminal prodomain (p31). Requires Ca(2+) as cofactor. In terms of processing, the prodomain (p31) is cleaved, probably by autocatalysis, during the transport to or in the Golgi apparatus, and remains non-covalently associated with the p54 form as an inhibitor. p54 is further cleaved into the p47 form. This cleavage is likely occurring in the exoneme prior to egress and is mediated by PMX/plasmepsin X. The p54-to-p47 conversion can be also autocatalytic. Heterodimer p31-p54 is activated by cleavage of prodomain (p31) by the aspartic protease PMX; cleavage by PMX abolishes inhibitory capacity of p31. Primary autocatalytic processing of SUB1 is essential for parasite growth; the p54-to-p47 conversion is dispensable for SUB1 functions in the parasites. The disulfide bond between Cys-523 and Cys-536 acts as a redox-sensitive disulfide switch. The oxidized form is required for catalytic activity. Post-translationally, the relevance of N-glycosylation is not clear. In an insect expression system, SUB1 glycosylation appears to affect its processing into the active mature form suggesting that SUB1 may not be N-glycosylated in parasites.

Its subcellular location is the secreted. The protein resides in the parasitophorous vacuole lumen. It carries out the reaction Hydrolysis of proteins with broad specificity for peptide bonds, and a preference for a large uncharged residue in P1. Hydrolyzes peptide amides.. P54 and probably p47 forms are inhibited by the non-covalent interaction with the cleaved propeptide. Inhibited by subtilisin propeptide-like protein SUB1-ProM. Inhibited by 3,4-dichloroisocoumarin (DCI) and 4-(hydroxymercuri)benzoic acid (pHMB). Partially inhibited by chymostatin, leupeptin, phenylmethylsulfonyl fluoride (PMSF), and 4-(2-aminoethyl)benzenesulfonyl fluoride. Its function is as follows. Serine protease which plays an essential role in merozoite invasion of and egress from host erythrocytes by processing and activating various merozoite surface and parasitophorous vacuole proteins. Mediates the proteolytic maturation of serine proteases SERA4, SERA5 and SERA6 just prior to merozoite egress. Prior to merozoite egress, cleaves merozoite surface proteins MSP1, MSP6 and MSP7, which form the MSP1/6/7 complex, and thereby may prime the parasite cell surface for invasion of fresh erythrocytes. Prior to merozoite egress, cleaves MSRP2 converting it to MSRP2 p25 form, and RAP1 converting it to RAP1 p67 form. The sequence is that of Subtilisin-like protease 1 from Plasmodium falciparum.